A 109-amino-acid chain; its full sequence is Large ribosomal subunit protein uL22 (109 aa).

It belongs to the universal ribosomal protein uL22 family. As to quaternary structure, part of the 50S ribosomal subunit.

In terms of biological role, this protein binds specifically to 23S rRNA; its binding is stimulated by other ribosomal proteins, e.g. L4, L17, and L20. It is important during the early stages of 50S assembly. It makes multiple contacts with different domains of the 23S rRNA in the assembled 50S subunit and ribosome. The globular domain of the protein is located near the polypeptide exit tunnel on the outside of the subunit, while an extended beta-hairpin is found that lines the wall of the exit tunnel in the center of the 70S ribosome. This Laribacter hongkongensis (strain HLHK9) protein is Large ribosomal subunit protein uL22.